The following is a 139-amino-acid chain: Hydrogenase maturation factor HypA (139 aa).

Residue His2 participates in Ni(2+) binding. Residues Cys75, Cys78, Cys111, and Cys114 each contribute to the Zn(2+) site.

The protein belongs to the HypA/HybF family.

Functionally, involved in the maturation of [NiFe] hydrogenases. Required for nickel insertion into the metal center of the hydrogenase. This Ignicoccus hospitalis (strain KIN4/I / DSM 18386 / JCM 14125) protein is Hydrogenase maturation factor HypA.